The chain runs to 161 residues: Nucleotide-binding protein Vapar_3769 (161 aa).

The protein belongs to the YajQ family.

Nucleotide-binding protein. In Variovorax paradoxus (strain S110), this protein is Nucleotide-binding protein Vapar_3769.